A 297-amino-acid polypeptide reads, in one-letter code: Nitrogenase iron protein (297 aa).

Position 11–18 (11–18 (GKGGIGKS)) interacts with ATP. Residue C99 participates in [4Fe-4S] cluster binding. R102 is subject to ADP-ribosylarginine; by dinitrogenase reductase ADP-ribosyltransferase. C133 contacts [4Fe-4S] cluster.

The protein belongs to the NifH/BchL/ChlL family. In terms of assembly, homodimer. It depends on [4Fe-4S] cluster as a cofactor. The reversible ADP-ribosylation of Arg-102 inactivates the nitrogenase reductase and regulates nitrogenase activity.

The enzyme catalyses N2 + 8 reduced [2Fe-2S]-[ferredoxin] + 16 ATP + 16 H2O = H2 + 8 oxidized [2Fe-2S]-[ferredoxin] + 2 NH4(+) + 16 ADP + 16 phosphate + 6 H(+). Its function is as follows. The key enzymatic reactions in nitrogen fixation are catalyzed by the nitrogenase complex, which has 2 components: the iron protein and the molybdenum-iron protein. This chain is Nitrogenase iron protein, found in Mesorhizobium japonicum (strain LMG 29417 / CECT 9101 / MAFF 303099) (Mesorhizobium loti (strain MAFF 303099)).